The sequence spans 891 residues: Alanine--tRNA ligase (891 aa).

4 residues coordinate Zn(2+): H564, H568, C677, and H681.

It belongs to the class-II aminoacyl-tRNA synthetase family. The cofactor is Zn(2+).

It localises to the cytoplasm. The catalysed reaction is tRNA(Ala) + L-alanine + ATP = L-alanyl-tRNA(Ala) + AMP + diphosphate. In terms of biological role, catalyzes the attachment of alanine to tRNA(Ala) in a two-step reaction: alanine is first activated by ATP to form Ala-AMP and then transferred to the acceptor end of tRNA(Ala). Also edits incorrectly charged Ser-tRNA(Ala) and Gly-tRNA(Ala) via its editing domain. This chain is Alanine--tRNA ligase, found in Bradyrhizobium sp. (strain ORS 278).